The following is a 253-amino-acid chain: Small ribosomal subunit protein uS3 (253 aa).

The KH type-2 domain maps to Val39 to Arg107. The tract at residues Leu215–Ala253 is disordered. A compositionally biased stretch (basic and acidic residues) spans Gly230–Ala253.

It belongs to the universal ribosomal protein uS3 family. Part of the 30S ribosomal subunit. Forms a tight complex with proteins S10 and S14.

Its function is as follows. Binds the lower part of the 30S subunit head. Binds mRNA in the 70S ribosome, positioning it for translation. The polypeptide is Small ribosomal subunit protein uS3 (Phenylobacterium zucineum (strain HLK1)).